The primary structure comprises 476 residues: Glycogen synthase (476 aa).

Lys15 provides a ligand contact to ADP-alpha-D-glucose.

This sequence belongs to the glycosyltransferase 1 family. Bacterial/plant glycogen synthase subfamily.

It carries out the reaction [(1-&gt;4)-alpha-D-glucosyl](n) + ADP-alpha-D-glucose = [(1-&gt;4)-alpha-D-glucosyl](n+1) + ADP + H(+). It participates in glycan biosynthesis; glycogen biosynthesis. Functionally, synthesizes alpha-1,4-glucan chains using ADP-glucose. The polypeptide is Glycogen synthase (Bacillus cereus (strain Q1)).